Here is a 157-residue protein sequence, read N- to C-terminus: 2-C-methyl-D-erythritol 2,4-cyclodiphosphate synthase (157 aa).

The a divalent metal cation site is built by aspartate 8 and histidine 10. Residues 8 to 10 (DVH) and 34 to 35 (HS) contribute to the 4-CDP-2-C-methyl-D-erythritol 2-phosphate site. Position 42 (histidine 42) interacts with a divalent metal cation. Residues 56–58 (DIG), 61–65 (FPDTD), 100–106 (AQRPKMA), 132–135 (TTTE), phenylalanine 139, and arginine 142 contribute to the 4-CDP-2-C-methyl-D-erythritol 2-phosphate site.

This sequence belongs to the IspF family. In terms of assembly, homotrimer. The cofactor is a divalent metal cation.

It catalyses the reaction 4-CDP-2-C-methyl-D-erythritol 2-phosphate = 2-C-methyl-D-erythritol 2,4-cyclic diphosphate + CMP. Its pathway is isoprenoid biosynthesis; isopentenyl diphosphate biosynthesis via DXP pathway; isopentenyl diphosphate from 1-deoxy-D-xylulose 5-phosphate: step 4/6. Its function is as follows. Involved in the biosynthesis of isopentenyl diphosphate (IPP) and dimethylallyl diphosphate (DMAPP), two major building blocks of isoprenoid compounds. Catalyzes the conversion of 4-diphosphocytidyl-2-C-methyl-D-erythritol 2-phosphate (CDP-ME2P) to 2-C-methyl-D-erythritol 2,4-cyclodiphosphate (ME-CPP) with a corresponding release of cytidine 5-monophosphate (CMP). The protein is 2-C-methyl-D-erythritol 2,4-cyclodiphosphate synthase of Geobacter sulfurreducens (strain ATCC 51573 / DSM 12127 / PCA).